A 254-amino-acid chain; its full sequence is Alcohol dehydrogenase (254 aa).

10-33 (FVAGLGGIGLETSREIVKSGPKNL) provides a ligand contact to NAD(+). Position 138 (serine 138) interacts with substrate. The Proton acceptor role is filled by tyrosine 151.

This sequence belongs to the short-chain dehydrogenases/reductases (SDR) family. In terms of assembly, homodimer.

The enzyme catalyses a primary alcohol + NAD(+) = an aldehyde + NADH + H(+). It carries out the reaction a secondary alcohol + NAD(+) = a ketone + NADH + H(+). The sequence is that of Alcohol dehydrogenase (Adh) from Scaptomyza crassifemur (Fruit fly).